The following is a 428-amino-acid chain: Glutamate-1-semialdehyde 2,1-aminomutase (428 aa).

Lys-265 carries the N6-(pyridoxal phosphate)lysine modification.

This sequence belongs to the class-III pyridoxal-phosphate-dependent aminotransferase family. HemL subfamily. In terms of assembly, homodimer. It depends on pyridoxal 5'-phosphate as a cofactor.

It is found in the cytoplasm. The catalysed reaction is (S)-4-amino-5-oxopentanoate = 5-aminolevulinate. Its pathway is porphyrin-containing compound metabolism; protoporphyrin-IX biosynthesis; 5-aminolevulinate from L-glutamyl-tRNA(Glu): step 2/2. This chain is Glutamate-1-semialdehyde 2,1-aminomutase, found in Proteus mirabilis (strain HI4320).